Reading from the N-terminus, the 181-residue chain is Large ribosomal subunit protein uL5c (181 aa).

It belongs to the universal ribosomal protein uL5 family. In terms of assembly, part of the 50S ribosomal subunit; contacts the 5S rRNA.

Its subcellular location is the plastid. The protein localises to the chloroplast. Its function is as follows. Binds 5S rRNA, forms part of the central protuberance of the 50S subunit. The chain is Large ribosomal subunit protein uL5c (rpl5) from Rhodomonas salina (Cryptomonas salina).